Consider the following 204-residue polypeptide: Copper-binding protein CutI (204 aa).

The N-terminal stretch at 1–26 (MLKKIALTLCPAIVGSLLFFTAPASA) is a signal peptide. Residues histidine 27 and glutamate 50 each contribute to the Cu(2+) site. Over 27–178 (HVSVKPAESA…DDSENSGSSA (152 aa)) the chain is Extracellular. The disordered stretch occupies residues 146–176 (PHSITNITSAKQVTDEHGATKTEDDSENSGS). Positions 147–157 (HSITNITSAKQ) are enriched in polar residues. Over residues 158-168 (VTDEHGATKTE) the composition is skewed to basic and acidic residues. Residues 179 to 199 (LDITAMVLSAAAIILSVAALV) form a helical membrane-spanning segment. The Cytoplasmic portion of the chain corresponds to 200–204 (KKKRA).

The protein localises to the cell membrane. Functionally, copper-binding protein that probably plays a role in copper homeostasis. May act as metallochaperone, possibly to facilitate copper uptake via the CutJ/YcnJ importer. Preferentially binds Cu in its oxidized Cu(II) state in a 1:1 stoichiometry. This Bacillus subtilis (strain 168) protein is Copper-binding protein CutI.